A 953-amino-acid polypeptide reads, in one-letter code: Coatomer subunit beta (953 aa).

N-acetylthreonine is present on Thr2. HEAT repeat units lie at residues 96-131, 132-168, 240-276, 277-314, 316-353, and 396-433; these read HEMI…KEAE, LLEP…NFEN, SERA…SAPT, AIKA…HPAH, RVLQ…SRNV, and DMAA…RFDN. At Lys494 the chain carries N6-acetyllysine.

As to quaternary structure, oligomeric complex that consists of at least the alpha, beta, beta', gamma, delta, epsilon and zeta subunits. Interacts with SCYL1. Interacts with CAPN8. Interacts with COPG1. Interacts with ARF1 (myristoylated); this interaction is required for binding of COPB1 to Golgi membranes. Interacts (via trunk domain) with ARF1 (via switch I region); the interaction is direct. Interacts with KCNK2 (via N-terminus); this interaction increases the channel-mediated whole cell currents and promotes plasma membrane expression of KCNK2. Interacts with PRKCE. Interacts with STX17. Interacts with TMEM115. Interacts with TMEM41B. Proteolytically cleaved between Ser-528 and Ser-529 by CAPN8.

The protein resides in the cytoplasm. It is found in the golgi apparatus membrane. It localises to the cytoplasmic vesicle. Its subcellular location is the COPI-coated vesicle membrane. The protein localises to the cell membrane. The protein resides in the endoplasmic reticulum-Golgi intermediate compartment. It is found in the microsome membrane. Its function is as follows. The coatomer is a cytosolic protein complex that binds to dilysine motifs and reversibly associates with Golgi non-clathrin-coated vesicles, which further mediate biosynthetic protein transport from the ER, via the Golgi up to the trans Golgi network. Coatomer complex is required for budding from Golgi membranes, and is essential for the retrograde Golgi-to-ER transport of dilysine-tagged proteins. In mammals, the coatomer can only be recruited by membranes associated to ADP-ribosylation factors (ARFs), which are small GTP-binding proteins; the complex also influences the Golgi structural integrity, as well as the processing, activity, and endocytic recycling of LDL receptors. Involved in the Golgi disassembly and reassembly processes during cell cycle. Involved in autophagy by playing a role in early endosome function. Plays a role in organellar compartmentalization of secretory compartments including endoplasmic reticulum (ER)-Golgi intermediate compartment (ERGIC), Golgi, trans-Golgi network (TGN) and recycling endosomes, and in biosynthetic transport of CAV1. Plays a functional role in facilitating the transport of kappa-type opioid receptor mRNAs into axons and enhances translation of these proteins in the axonal compartment of dorsal root ganglion (DRG) cells. Required for limiting lipid storage in lipid droplets. Involved in lipid homeostasis by regulating the presence of perilipin family members PLIN2 and PLIN3 at the lipid droplet surface and promoting the association of adipocyte triglyceride lipase (PNPLA2) with the lipid droplet surface to mediate lipolysis. The sequence is that of Coatomer subunit beta (Copb1) from Rattus norvegicus (Rat).